A 200-amino-acid chain; its full sequence is Probable GTP-binding protein EngB (200 aa).

In terms of domain architecture, EngB-type G spans 26–200 (SIPEIAIAGR…IYEIAQCIKK (175 aa)). Residues 34-41 (GRSNVGKS), 61-65 (GCTKQ), 80-83 (DLPG), 147-150 (TKID), and 176-179 (VISA) each bind GTP. Residues S41 and T63 each contribute to the Mg(2+) site.

Belongs to the TRAFAC class TrmE-Era-EngA-EngB-Septin-like GTPase superfamily. EngB GTPase family. The cofactor is Mg(2+).

In terms of biological role, necessary for normal cell division and for the maintenance of normal septation. The chain is Probable GTP-binding protein EngB from Ehrlichia canis (strain Jake).